We begin with the raw amino-acid sequence, 696 residues long: Polyribonucleotide nucleotidyltransferase (696 aa).

Asp-483 and Asp-489 together coordinate Mg(2+). The region spanning 550–609 is the KH domain; sequence PRITTIYVKTDKIRDVIGSGGKNIRGITEATGVTIDIDDTGKINIASTDKAACDMAIKMI. Positions 619–687 constitute an S1 motif domain; it reads GKLYMGLVKK…KQGKIKLSRK (69 aa).

This sequence belongs to the polyribonucleotide nucleotidyltransferase family. Requires Mg(2+) as cofactor.

The protein localises to the cytoplasm. It catalyses the reaction RNA(n+1) + phosphate = RNA(n) + a ribonucleoside 5'-diphosphate. Involved in mRNA degradation. Catalyzes the phosphorolysis of single-stranded polyribonucleotides processively in the 3'- to 5'-direction. The chain is Polyribonucleotide nucleotidyltransferase from Geotalea daltonii (strain DSM 22248 / JCM 15807 / FRC-32) (Geobacter daltonii).